The following is a 505-amino-acid chain: Formate--tetrahydrofolate ligase (505 aa).

It belongs to the formate--tetrahydrofolate ligase family.

The catalysed reaction is (6S)-5,6,7,8-tetrahydrofolate + formate + ATP = (6R)-10-formyltetrahydrofolate + ADP + phosphate. Its pathway is one-carbon metabolism; tetrahydrofolate interconversion. The chain is Formate--tetrahydrofolate ligase (fhs) from Bifidobacterium longum (strain NCC 2705).